The following is a 426-amino-acid chain: Serine--tRNA ligase (426 aa).

Position 233-235 (233-235 (TAE)) interacts with L-serine. 264 to 266 (RSE) contributes to the ATP binding site. Glu287 is an L-serine binding site. 351–354 (EISS) serves as a coordination point for ATP. Position 387 (Ser387) interacts with L-serine.

The protein belongs to the class-II aminoacyl-tRNA synthetase family. Type-1 seryl-tRNA synthetase subfamily. Homodimer. The tRNA molecule binds across the dimer.

Its subcellular location is the cytoplasm. It catalyses the reaction tRNA(Ser) + L-serine + ATP = L-seryl-tRNA(Ser) + AMP + diphosphate + H(+). The catalysed reaction is tRNA(Sec) + L-serine + ATP = L-seryl-tRNA(Sec) + AMP + diphosphate + H(+). It participates in aminoacyl-tRNA biosynthesis; selenocysteinyl-tRNA(Sec) biosynthesis; L-seryl-tRNA(Sec) from L-serine and tRNA(Sec): step 1/1. In terms of biological role, catalyzes the attachment of serine to tRNA(Ser). Is also able to aminoacylate tRNA(Sec) with serine, to form the misacylated tRNA L-seryl-tRNA(Sec), which will be further converted into selenocysteinyl-tRNA(Sec). The sequence is that of Serine--tRNA ligase from Clostridium botulinum (strain Loch Maree / Type A3).